The following is a 485-amino-acid chain: Glutamate mutase epsilon subunit (485 aa).

Residue Arg100 coordinates L-glutamate. An adenosylcob(III)alamin-binding site is contributed by Asn123. Residues 149-150 and Asp171 each bind L-glutamate; that span reads KH. Positions 180, 297, 326, and 330 each coordinate adenosylcob(III)alamin.

It belongs to the methylaspartate mutase GlmE subunit family. As to quaternary structure, heterotetramer composed of 2 epsilon subunits (GlmE) and 2 sigma subunits (GlmS). GlmE exists as a homodimer and GlmS as a monomer. It depends on adenosylcob(III)alamin as a cofactor.

It carries out the reaction (2S,3S)-3-methyl-L-aspartate = L-glutamate. Its pathway is amino-acid degradation; L-glutamate degradation via mesaconate pathway; acetate and pyruvate from L-glutamate: step 1/4. Catalyzes the carbon skeleton rearrangement of L-glutamate to L-threo-3-methylaspartate ((2S,3S)-3-methylaspartate). This Fusobacterium nucleatum subsp. nucleatum (strain ATCC 25586 / DSM 15643 / BCRC 10681 / CIP 101130 / JCM 8532 / KCTC 2640 / LMG 13131 / VPI 4355) protein is Glutamate mutase epsilon subunit.